Consider the following 515-residue polypeptide: Protein disulfide-isomerase (515 aa).

Residues 1–20 (MRSFAPWLVSLLGASAVVAA) form the signal peptide. Thioredoxin domains are found at residues 21 to 132 (ADTE…QSLP) and 339 to 470 (VLDG…ENGK). Catalysis depends on nucleophile residues Cys54, Cys57, Cys389, and Cys392. 2 disulfide bridges follow: Cys54–Cys57 and Cys389–Cys392. A disordered region spans residues 478-515 (VASEETQEGGDVTEAAPSATEAETPAATDDEKAEHDEL). Residues 490-504 (TEAAPSATEAETPAA) show a composition bias toward low complexity. Basic and acidic residues predominate over residues 506–515 (DDEKAEHDEL). The short motif at 512 to 515 (HDEL) is the Prevents secretion from ER element.

The protein belongs to the protein disulfide isomerase family.

The protein resides in the endoplasmic reticulum lumen. The catalysed reaction is Catalyzes the rearrangement of -S-S- bonds in proteins.. In terms of biological role, participates in the folding of proteins containing disulfide bonds, may be involved in glycosylation, prolyl hydroxylation and triglyceride transfer. The protein is Protein disulfide-isomerase (pdiA) of Aspergillus niger.